The sequence spans 487 residues: UPF0324 membrane protein NE0724 (487 aa).

11 consecutive transmembrane segments (helical) span residues 19–38 (WAVWLGLIMFMASVSSLWGW), 71–93 (PALSLLVTYLVFTALTCLAAWSM), 100–119 (FFIGWTILFIMTWVIWIIGN), 139–161 (LSLGSGFSYLLALLVGLVIGNFF), 181–200 (AIVFLGIKIGVMSIEAAGFI), 204–226 (VMTGVAATFVAYMLFWPIVYALG), 269–291 (VSILVVIFAMFELIILPGFYTAI), 350–369 (IWIDMFIGVWAFVLALVWVY), 389–411 (FPKFVLGYLLVWFSYIMLASSGS), 426–443 (GPMRNMMFMLTFISIGII), and 456–478 (ALLYAIALFGIIAPIAYGVAWIF).

This sequence belongs to the UPF0324 family.

Its subcellular location is the cell membrane. The polypeptide is UPF0324 membrane protein NE0724 (Nitrosomonas europaea (strain ATCC 19718 / CIP 103999 / KCTC 2705 / NBRC 14298)).